The primary structure comprises 517 residues: Crotonobetaine/carnitine--CoA ligase (517 aa).

Belongs to the ATP-dependent AMP-binding enzyme family.

It carries out the reaction 4-(trimethylamino)butanoate + ATP + CoA = 4-(trimethylamino)butanoyl-CoA + AMP + diphosphate. The catalysed reaction is crotonobetaine + ATP + CoA = crotonobetainyl-CoA + AMP + diphosphate. It catalyses the reaction (R)-carnitine + ATP + CoA = (R)-carnitinyl-CoA + AMP + diphosphate. It functions in the pathway amine and polyamine metabolism; carnitine metabolism. Catalyzes the transfer of CoA to carnitine, generating the initial carnitinyl-CoA needed for the CaiB reaction cycle. Also has activity toward crotonobetaine and gamma-butyrobetaine. This Escherichia coli (strain ATCC 8739 / DSM 1576 / NBRC 3972 / NCIMB 8545 / WDCM 00012 / Crooks) protein is Crotonobetaine/carnitine--CoA ligase.